A 260-amino-acid chain; its full sequence is UPF0246 protein Veis_4789 (260 aa).

This sequence belongs to the UPF0246 family.

The polypeptide is UPF0246 protein Veis_4789 (Verminephrobacter eiseniae (strain EF01-2)).